A 720-amino-acid chain; its full sequence is F-box/LRR-repeat MAX2 homolog (720 aa).

An F-box domain is found at 14 to 60; sequence SSAILDLPEPLLLHILSFLTDVRSRHRAALACGRMRAAERATRSELS. 18 LRR repeats span residues 71–134, 135–158, 159–189, 190–218, 219–247, 248–279, 280–316, 317–344, 345–372, 373–398, 399–435, 436–452, 453–510, 511–537, 538–571, 572–606, 607–644, and 645–720; these read LFLS…QNAF, IAAR…DPTT, LANL…PDGA, DLEP…DVVR, ALTT…FKSS, ELGP…VGDD, ALLS…ITVA, GLVA…EAAP, AMEA…KASW, LHLD…LTDA, SLAA…TLRP, TLKE…HTAE, CLTA…KCRY, MEFD…LLSP, LISA…PRTI, FGLS…GQMD, LSLW…SLTL, and PAVG…QIDD.

Associates to a SCF (SKP1-CUL1-F-box protein) E3 ubiquitin-protein ligase complex. Interacts with D14 in a strigolactone-dependent manner. Interacts with SKP1, SKP5 and SKP20. Expressed in leaves. Expressed in roots, culms, leaf blades, leaf sheaths, shoot bases and panicles.

The protein localises to the nucleus. Functionally, involved in strigolactone (SL) signaling. Required for responses to SLs and the establishment of arbuscular mycorrhiza symbiosis in rice. Strigolactone-dependent association of D3 with D14 and D53 (a repressor of SL signaling) triggers D53 ubiquitination and degradation. Controls tillering by suppressing axillary bud activity. Tiller is a specialized grain-bearing branch that is formed on the unelongated basal internode and grows independently of the mother stem (culm) by means of its own adventitious roots. This Oryza sativa subsp. japonica (Rice) protein is F-box/LRR-repeat MAX2 homolog.